Consider the following 363-residue polypeptide: UDP-N-acetylglucosamine--N-acetylmuramyl-(pentapeptide) pyrophosphoryl-undecaprenol N-acetylglucosamine transferase (363 aa).

UDP-N-acetyl-alpha-D-glucosamine contacts are provided by residues 12 to 14 (TAG), arginine 166, serine 196, and glutamine 291.

Belongs to the glycosyltransferase 28 family. MurG subfamily.

Its subcellular location is the cell inner membrane. The catalysed reaction is di-trans,octa-cis-undecaprenyl diphospho-N-acetyl-alpha-D-muramoyl-L-alanyl-D-glutamyl-meso-2,6-diaminopimeloyl-D-alanyl-D-alanine + UDP-N-acetyl-alpha-D-glucosamine = di-trans,octa-cis-undecaprenyl diphospho-[N-acetyl-alpha-D-glucosaminyl-(1-&gt;4)]-N-acetyl-alpha-D-muramoyl-L-alanyl-D-glutamyl-meso-2,6-diaminopimeloyl-D-alanyl-D-alanine + UDP + H(+). The protein operates within cell wall biogenesis; peptidoglycan biosynthesis. Functionally, cell wall formation. Catalyzes the transfer of a GlcNAc subunit on undecaprenyl-pyrophosphoryl-MurNAc-pentapeptide (lipid intermediate I) to form undecaprenyl-pyrophosphoryl-MurNAc-(pentapeptide)GlcNAc (lipid intermediate II). This is UDP-N-acetylglucosamine--N-acetylmuramyl-(pentapeptide) pyrophosphoryl-undecaprenol N-acetylglucosamine transferase from Legionella pneumophila (strain Lens).